The primary structure comprises 177 residues: Large ribosomal subunit protein uL6 (177 aa).

Belongs to the universal ribosomal protein uL6 family. Part of the 50S ribosomal subunit.

In terms of biological role, this protein binds to the 23S rRNA, and is important in its secondary structure. It is located near the subunit interface in the base of the L7/L12 stalk, and near the tRNA binding site of the peptidyltransferase center. In Methylococcus capsulatus (strain ATCC 33009 / NCIMB 11132 / Bath), this protein is Large ribosomal subunit protein uL6.